We begin with the raw amino-acid sequence, 354 residues long: (R,R)-butanediol dehydrogenase (354 aa).

Residues 10-350 (GDIRIEDIPE…NNESAVKIIV (341 aa)) form the Enoyl reductase (ER) domain. Cys37, His71, and Glu157 together coordinate Zn(2+).

The protein belongs to the zinc-containing alcohol dehydrogenase family. The cofactor is Zn(2+).

The catalysed reaction is (R,R)-butane-2,3-diol + NAD(+) = (R)-acetoin + NADH + H(+). It carries out the reaction (S)-acetoin + NAD(+) = diacetyl + NADH + H(+). Functionally, NAD-dependent butanediol dehydrogenase which catalyzes the oxidation of (R,R)-butane-2,3-diol to (3R)-acetoin and of meso-butane-2,3-diol to (3S)-acetoin. Preferentially oxidizes (R,R)-butane-2,3-diol, with a catalytic efficiency approximately fourfold higher than with meso-butane-2,3-diol. Shows a very low activity with (S,S)-butane-2,3-diol. Can also catalyze the reduction of (3R/3S)-acetoin and diacetyl in the presence of NADH. In Neisseria gonorrhoeae (strain ATCC 700825 / FA 1090), this protein is (R,R)-butanediol dehydrogenase.